A 118-amino-acid chain; its full sequence is Putative pterin-4-alpha-carbinolamine dehydratase (118 aa).

Belongs to the pterin-4-alpha-carbinolamine dehydratase family.

The enzyme catalyses (4aS,6R)-4a-hydroxy-L-erythro-5,6,7,8-tetrahydrobiopterin = (6R)-L-erythro-6,7-dihydrobiopterin + H2O. The polypeptide is Putative pterin-4-alpha-carbinolamine dehydratase (Pseudomonas paraeruginosa (strain DSM 24068 / PA7) (Pseudomonas aeruginosa (strain PA7))).